The following is a 496-amino-acid chain: Angiopoietin-2 (496 aa).

The N-terminal stretch at 1 to 18 (MWQLVFFALSCDLVLAAA) is a signal peptide. N-linked (GlcNAc...) asparagine glycosylation is found at N89, N119, N133, N151, N240, and N304. Residues 130-255 (NLLNQTAEQT…KQQHDLMETV (126 aa)) are a coiled coil. Residues 275–495 (KEEQIIFRDC…ATTMMIRPAD (221 aa)) enclose the Fibrinogen C-terminal domain. An intrachain disulfide couples C284 to C313. D429, D431, C433, and C435 together coordinate Ca(2+). Cystine bridges form between C433/C435 and C437/C450.

As to quaternary structure, interacts with TEK/TIE2, competing for the same binding site as ANGPT1. Interacts with ITGA5. Interacts with SVEP1/polydom. Interacts with THBD; this interaction significantly inhibits the generation of activated PC and TAFIa/CPB2 by the thrombin/thrombomodulin complex.

It is found in the secreted. Its function is as follows. Binds to TEK/TIE2, competing for the ANGPT1 binding site, and modulating ANGPT1 signaling. Can induce tyrosine phosphorylation of TEK/TIE2 in the absence of ANGPT1. In the absence of angiogenic inducers, such as VEGF, ANGPT2-mediated loosening of cell-matrix contacts may induce endothelial cell apoptosis with consequent vascular regression. In concert with VEGF, it may facilitate endothelial cell migration and proliferation, thus serving as a permissive angiogenic signal. Involved in the regulation of lymphangiogenesis. The protein is Angiopoietin-2 (ANGPT2) of Sus scrofa (Pig).